Consider the following 549-residue polypeptide: Chaperonin GroEL (549 aa).

Residues 30–33 (TLGP), lysine 51, 87–91 (DGTTT), glycine 415, and aspartate 495 contribute to the ATP site.

The protein belongs to the chaperonin (HSP60) family. Forms a cylinder of 14 subunits composed of two heptameric rings stacked back-to-back. Interacts with the co-chaperonin GroES.

It is found in the cytoplasm. It carries out the reaction ATP + H2O + a folded polypeptide = ADP + phosphate + an unfolded polypeptide.. Together with its co-chaperonin GroES, plays an essential role in assisting protein folding. The GroEL-GroES system forms a nano-cage that allows encapsulation of the non-native substrate proteins and provides a physical environment optimized to promote and accelerate protein folding. This is Chaperonin GroEL from Hahella chejuensis (strain KCTC 2396).